Consider the following 277-residue polypeptide: Ubiquitin-conjugating enzyme suppressor 1 (277 aa).

Residues 254 to 277 (RTLACPDETNDNRGSEHYTKRKKI) are disordered.

Its function is as follows. Not known; its elevated expression suppresses the conditional cell cycle defects associated with UBC3/CDC34 mutations. This is Ubiquitin-conjugating enzyme suppressor 1 (UBS1) from Saccharomyces cerevisiae (strain ATCC 204508 / S288c) (Baker's yeast).